The chain runs to 253 residues: Solute carrier family 66 member 2 (253 aa).

The next 6 helical transmembrane spans lie at 7–27 (GWLL…AMVF), 49–69 (FSTY…LFWF), 72–92 (HFES…LLML), 125–145 (FADY…ITYL), 150–170 (ALFV…LGVP), and 214–234 (VCGL…YVFT). The PQ-loop 1 domain occupies 14 to 80 (HQLVSWGAAG…RHFESPLLWQ (67 aa)). Residues 160–215 (AVLTEAMLGVPQLYRNHRHQSTEGMSIKMVLMWTSGDTFKTAYFLLNGAPLQFSVC) enclose the PQ-loop 2 domain.

Its subcellular location is the membrane. The protein is Solute carrier family 66 member 2 (SLC66A2) of Bos taurus (Bovine).